A 330-amino-acid chain; its full sequence is Aspartate--ammonia ligase (330 aa).

The protein belongs to the class-II aminoacyl-tRNA synthetase family. AsnA subfamily.

It is found in the cytoplasm. The enzyme catalyses L-aspartate + NH4(+) + ATP = L-asparagine + AMP + diphosphate + H(+). Its pathway is amino-acid biosynthesis; L-asparagine biosynthesis; L-asparagine from L-aspartate (ammonia route): step 1/1. The polypeptide is Aspartate--ammonia ligase (Yersinia pseudotuberculosis serotype O:1b (strain IP 31758)).